Reading from the N-terminus, the 520-residue chain is Type I restriction enzyme EcoprrI methylase subunit (520 aa).

S-adenosyl-L-methionine contacts are provided by residues 198 to 203, 230 to 232, and Glu254; these read EFFTPQ and SGS.

This sequence belongs to the N(4)/N(6)-methyltransferase family. As to quaternary structure, the type I restriction/modification system is composed of three polypeptides R, M and S; the restriction enzyme has stoichiometry R(2)M(2)S(1) while the methyltransferase is M(2)S(1).

The enzyme catalyses a 2'-deoxyadenosine in DNA + S-adenosyl-L-methionine = an N(6)-methyl-2'-deoxyadenosine in DNA + S-adenosyl-L-homocysteine + H(+). The subtype gamma methyltransferase (M) subunit of a type I restriction enzyme. The M and S subunits together form a methyltransferase (MTase) that methylates two adenine residues of the sequence 5'-CCAN(7)ATGC-3'. In the presence of the R subunit the complex can also act as an endonuclease, binding to the same target sequence but cutting the DNA some distance from this site. Whether the DNA is cut or modified depends on the methylation state of the target sequence. When the target site is unmodified, the DNA is cut. When the target site is hemimethylated, the complex acts as a maintenance MTase modifying the DNA so that both strands become methylated. After locating a non-methylated recognition site, the enzyme complex serves as a molecular motor that translocates DNA in an ATP-dependent manner until a collision occurs that triggers cleavage. This chain is Type I restriction enzyme EcoprrI methylase subunit, found in Escherichia coli.